Reading from the N-terminus, the 2289-residue chain is Protein Ycf2 (2289 aa).

1643 to 1650 (GSIGTGRS) contacts ATP.

This sequence belongs to the Ycf2 family.

It localises to the plastid. Its subcellular location is the chloroplast stroma. Probable ATPase of unknown function. Its presence in a non-photosynthetic plant (Epifagus virginiana) and experiments in tobacco indicate that it has an essential function which is probably not related to photosynthesis. The chain is Protein Ycf2 from Aethionema grandiflorum (Persian stone-cress).